Reading from the N-terminus, the 202-residue chain is Mevalonate-3-phosphate 5-kinase (202 aa).

The catalysed reaction is (R)-3-phosphomevalonate + ATP = (R)-3,5-bisphosphomevalonate + ADP + H(+). Its pathway is isoprenoid biosynthesis; isopentenyl diphosphate biosynthesis via mevalonate pathway. Its function is as follows. Phosphorylates mevalonate 3-phosphate to form mevalonate 3,5-bisphosphate. Functions in an alternative mevalonate pathway, only present in extreme acidophiles of the Thermoplasmatales order, which passes through mevalonate 3-phosphate rather than mevalonate 5-phosphate. The polypeptide is Mevalonate-3-phosphate 5-kinase (Thermoplasma acidophilum (strain ATCC 25905 / DSM 1728 / JCM 9062 / NBRC 15155 / AMRC-C165)).